Here is a 647-residue protein sequence, read N- to C-terminus: Threonine--tRNA ligase (647 aa).

The 61-residue stretch at 1–61 (MIKITFPDGA…EEDGSIEIVT (61 aa)) folds into the TGS domain. A catalytic region spans residues 240-538 (DHRKLGKELD…LIETYKGAFP (299 aa)). Zn(2+) is bound by residues Cys334, His385, and His515.

This sequence belongs to the class-II aminoacyl-tRNA synthetase family. As to quaternary structure, homodimer. Requires Zn(2+) as cofactor.

Its subcellular location is the cytoplasm. It catalyses the reaction tRNA(Thr) + L-threonine + ATP = L-threonyl-tRNA(Thr) + AMP + diphosphate + H(+). Catalyzes the attachment of threonine to tRNA(Thr) in a two-step reaction: L-threonine is first activated by ATP to form Thr-AMP and then transferred to the acceptor end of tRNA(Thr). Also edits incorrectly charged L-seryl-tRNA(Thr). This chain is Threonine--tRNA ligase, found in Streptococcus agalactiae serotype V (strain ATCC BAA-611 / 2603 V/R).